A 440-amino-acid chain; its full sequence is RUN domain-containing protein 3A (440 aa).

Residues Asp-52–Glu-184 enclose the RUN domain. The tract at residues Asp-213 to Leu-233 is disordered. The stretch at Tyr-262 to Leu-317 forms a coiled coil. The segment at Leu-374 to Leu-402 is disordered.

Belongs to the RUNDC3 family.

In Xenopus tropicalis (Western clawed frog), this protein is RUN domain-containing protein 3A (rundc3a).